Here is a 445-residue protein sequence, read N- to C-terminus: Serine/threonine-protein kinase Nek2 (445 aa).

The Protein kinase domain maps to 8–271 (YEVLYTIGTG…VEEILENPLI (264 aa)). Residues 14 to 22 (IGTGSYGRC) and Lys-37 each bind ATP. The active-site Proton acceptor is the Asp-141. Phosphothreonine; by autocatalysis is present on Thr-170. Position 171 is a phosphoserine; by autocatalysis (Ser-171). Thr-175 and Thr-179 each carry phosphothreonine; by autocatalysis. Ser-184 carries the phosphoserine modification. Ser-241 is subject to Phosphoserine; by autocatalysis. Residues 264–445 (EILENPLIAD…LKSRQILGMR (182 aa)) form an interaction with PCNT region. Ser-296 and Ser-300 each carry phosphoserine. The interaction with CEP85 stretch occupies residues 301–445 (PVLSELKLKE…LKSRQILGMR (145 aa)). Positions 303–362 (LSELKLKEIQLQERERALKAREERLEQKEQELCVRERLAEDKLARAENLLKNYSLLKERK) form a coiled coil. The segment at 306–334 (LKLKEIQLQERERALKAREERLEQKEQEL) is leucine-zipper. A necessary for interaction with MAD1L1 region spans residues 329–445 (QKEQELCVRE…LKSRQILGMR (117 aa)). The required for microtubule binding and for localization to the centrosomes stretch occupies residues 333-370 (ELCVRERLAEDKLARAENLLKNYSLLKERKFLSLASNP). Ser-356 and Ser-365 each carry phosphoserine; by STK3/MST2. Phosphoserine is present on residues Ser-387, Ser-390, Ser-397, and Ser-402. The tract at residues 403-439 (QLTSKSKCKDLKKRLHAAQLRAQALSDIEKNYQLKSR) is interaction with SAV1 and STK3/MST2. Ser-406 bears the Phosphoserine; by STK3/MST2 mark. Residues 406-430 (SKSKCKDLKKRLHAAQLRAQALSDI) are a coiled coil. Residue Ser-428 is modified to Phosphoserine. Phosphoserine; by STK3/MST2 is present on Ser-438.

It belongs to the protein kinase superfamily. NEK Ser/Thr protein kinase family. NIMA subfamily. Isoform 1, isoform 2 and isoform 4 form homo- and heterodimers. Interacts with NECAB3 and HMGA2. Isoform 1 interacts with CDC20, CTNB1, MAD1L1, MAPK, NEK11, NPM1, NDC80, PCNT and SGO1. Isoform 1 interacts with STK3/MST2 (via SARAH domain) and SAV1 (via SARAH domain). Isoform 1 and isoform 2 interact with MAD2L1. Isoform 1 and isoform 4 interact with PPP1CA and PPP1CC. Interacts with CEP68; the interaction leads to phosphorylation of CEP68. Interacts with CNTLN; the interaction leads to phosphorylation of CNTLN. Isoform 1 interacts with CEP85. Interacts with CCDC102B; the interaction leads to phosphorylation of CCDC102B. Mg(2+) is required as a cofactor. Post-translationally, activated by autophosphorylation. Protein phosphatase 1 represses autophosphorylation and activation of isoform 1 by dephosphorylation. Phosphorylation by STK3/MST2 is necessary for its localization to the centrosome. In terms of tissue distribution, isoform 1 and isoform 2 are expressed in peripheral blood T-cells and a wide variety of transformed cell types. Isoform 1 and isoform 4 are expressed in the testis. Up-regulated in various cancer cell lines, as well as primary breast tumors.

It is found in the nucleus. It localises to the nucleolus. The protein resides in the cytoplasm. The protein localises to the cytoskeleton. Its subcellular location is the microtubule organizing center. It is found in the centrosome. It localises to the spindle pole. The protein resides in the chromosome. The protein localises to the centromere. Its subcellular location is the kinetochore. It catalyses the reaction L-seryl-[protein] + ATP = O-phospho-L-seryl-[protein] + ADP + H(+). The catalysed reaction is L-threonyl-[protein] + ATP = O-phospho-L-threonyl-[protein] + ADP + H(+). Its activity is regulated as follows. Isoform 1 is inhibited by ionizing radiation in the presence of PPP1CA. Its catalytic activity is inhibited by the inhibitor CCT241950. In the presence of this inhibitor, displays an autoinhibited conformation: Tyr-70 side chain points into the active site, interacts with the activation loop, and blocks the alphaC helix. Its function is as follows. Protein kinase which is involved in the control of centrosome separation and bipolar spindle formation in mitotic cells and chromatin condensation in meiotic cells. Regulates centrosome separation (essential for the formation of bipolar spindles and high-fidelity chromosome separation) by phosphorylating centrosomal proteins such as CROCC, CEP250 and NINL, resulting in their displacement from the centrosomes. Regulates kinetochore microtubule attachment stability in mitosis via phosphorylation of NDC80. Involved in regulation of mitotic checkpoint protein complex via phosphorylation of CDC20 and MAD2L1. Plays an active role in chromatin condensation during the first meiotic division through phosphorylation of HMGA2. Phosphorylates: PPP1CC; SGO1; NECAB3 and NPM1. Essential for localization of MAD2L1 to kinetochore and MAPK1 and NPM1 to the centrosome. Phosphorylates CEP68 and CNTLN directly or indirectly. NEK2-mediated phosphorylation of CEP68 promotes CEP68 dissociation from the centrosome and its degradation at the onset of mitosis. Involved in the regulation of centrosome disjunction. Phosphorylates CCDC102B either directly or indirectly which causes CCDC102B to dissociate from the centrosome and allows for centrosome separation. Phosphorylates and activates NEK11 in G1/S-arrested cells. Functionally, not present in the nucleolus and, in contrast to isoform 1, does not phosphorylate and activate NEK11 in G1/S-arrested cells. The sequence is that of Serine/threonine-protein kinase Nek2 (NEK2) from Homo sapiens (Human).